A 330-amino-acid chain; its full sequence is Taste receptor type 2 member 136 (330 aa).

The Extracellular portion of the chain corresponds to Met1–Ala32. A helical membrane pass occupies residues Gly33–Val53. Over Thr54–Ser73 the chain is Cytoplasmic. Residues Leu74–Phe94 traverse the membrane as a helical segment. Over His95–Thr122 the chain is Extracellular. The helical transmembrane segment at Ile123–Leu143 threads the bilayer. Topologically, residues Lys144–Ser149 are cytoplasmic. A helical membrane pass occupies residues Val150–Thr170. At Val171–Ser201 the chain is on the extracellular side. N-linked (GlcNAc...) asparagine glycosylation is found at Asn183 and Asn195. The chain crosses the membrane as a helical span at residues Phe202–Tyr222. Topologically, residues Ser223–Lys248 are cytoplasmic. Residues Ala249–Ile269 traverse the membrane as a helical segment. The Extracellular segment spans residues Ser270–His283. Residues Leu284–Gly304 traverse the membrane as a helical segment. The Cytoplasmic segment spans residues Asn305 to Pro330.

This sequence belongs to the G-protein coupled receptor T2R family.

The protein localises to the membrane. In terms of biological role, putative taste receptor which may play a role in the perception of bitterness. The chain is Taste receptor type 2 member 136 from Rattus norvegicus (Rat).